A 540-amino-acid chain; its full sequence is Probable quinate permease (540 aa).

Over 1 to 22 the chain is Cytoplasmic; that stretch reads MSILALVEDRPTPKEVYNWRIY. Residues 23 to 43 traverse the membrane as a helical segment; that stretch reads LLAAVASFTSCMIGYDSAFIG. The Extracellular segment spans residues 44–74; that stretch reads TTLALGSFREEFEFTTMEPAAVNRVSANIVS. The helical transmembrane segment at 75-95 threads the bilayer; that stretch reads CYQAGAFFGAFFAYPIGHFWG. Over 96-97 the chain is Cytoplasmic; it reads RK. A helical membrane pass occupies residues 98–118; the sequence is WGLLSAAAIFTLGAGLMLGAN. The Extracellular segment spans residues 119–130; it reads GDRGLGLIYGGR. Residues 131–151 traverse the membrane as a helical segment; that stretch reads VLAGIGVGAGSNITPIYISEL. Residues 152–157 are Cytoplasmic-facing; it reads APPSIR. The chain crosses the membrane as a helical span at residues 158–178; the sequence is GHLVGVYELGWQIGGLVGFWI. Residues 179–193 are Extracellular-facing; the sequence is NYGVSETLAPSHKQW. The helical transmembrane segment at 194–214 threads the bilayer; it reads IIPFAVQLIPSGLLLIGAVFL. Topologically, residues 215-285 are cytoplasmic; sequence RESPRWLFSS…AGTNKKVMYR (71 aa). Residues 286–306 form a helical membrane-spanning segment; sequence LFLGSMLFFWQNGSGINAINY. Residues 307–325 are Extracellular-facing; that stretch reads YSPTVFKSIGLRGTNTGMF. A helical membrane pass occupies residues 326–346; that stretch reads STGIFGVVKTVVTFIWLLYLI. Residues 347-352 lie on the Cytoplasmic side of the membrane; sequence DRMGRR. A helical membrane pass occupies residues 353 to 373; it reads LLLLVGAAGASVCLWIVGAYI. The Extracellular portion of the chain corresponds to 374–387; the sequence is KIANPAKNGNGEMT. A helical transmembrane segment spans residues 388 to 408; sequence GGGIAAMFFFYLYTVFYTPSW. The Cytoplasmic portion of the chain corresponds to 409–456; it reads NGTPWVMNSEMFEPNMRSLAQACAAASNWLWNFLISRFTPQMFDKMGY. The helical transmembrane segment at 457–477 threads the bilayer; that stretch reads GVWFFFASLMLCSIVIVFFLI. The Extracellular portion of the chain corresponds to 478-540; it reads PETKGIPLES…RLESVQPKEA (63 aa). The tract at residues 519–540 is disordered; sequence IEESGYTKSGEQRLESVQPKEA. Positions 528–540 are enriched in basic and acidic residues; it reads GEQRLESVQPKEA.

It belongs to the major facilitator superfamily. Sugar transporter (TC 2.A.1.1) family. Interacts with creB. In terms of processing, ubiquitinated. Deubiquitinated by creB, probably to control its activity or amount.

Its subcellular location is the cell membrane. In terms of biological role, integral membrane transporter that imports quinic acid to be catabolized as a carbon source. The sequence is that of Probable quinate permease (qutD) from Aspergillus clavatus (strain ATCC 1007 / CBS 513.65 / DSM 816 / NCTC 3887 / NRRL 1 / QM 1276 / 107).